We begin with the raw amino-acid sequence, 316 residues long: Putative ubiquitin-conjugating enzyme E2 39 (316 aa).

The 161-residue stretch at 57–217 (NWVKDIQKEW…VFVFSLKTMH (161 aa)) folds into the UBC core domain. The active-site Glycyl thioester intermediate is cysteine 143.

The protein belongs to the ubiquitin-conjugating enzyme family.

It carries out the reaction S-ubiquitinyl-[E1 ubiquitin-activating enzyme]-L-cysteine + [E2 ubiquitin-conjugating enzyme]-L-cysteine = [E1 ubiquitin-activating enzyme]-L-cysteine + S-ubiquitinyl-[E2 ubiquitin-conjugating enzyme]-L-cysteine.. It functions in the pathway protein modification; protein ubiquitination. Its function is as follows. Accepts the ubiquitin from the E1 complex and catalyzes its covalent attachment to other proteins. The sequence is that of Putative ubiquitin-conjugating enzyme E2 39 (UBC39) from Arabidopsis thaliana (Mouse-ear cress).